The sequence spans 356 residues: Dual-specificity RNA methyltransferase RlmN (356 aa).

Glu89 serves as the catalytic Proton acceptor. Residues 108 to 341 form the Radical SAM core domain; it reads KHARYTICVS…CTIRESKGLD (234 aa). An intrachain disulfide couples Cys115 to Cys346. The [4Fe-4S] cluster site is built by Cys122, Cys126, and Cys129. S-adenosyl-L-methionine-binding positions include 172 to 173, Ser204, 227 to 229, and Asn303; these read GE and SLH. Cys346 serves as the catalytic S-methylcysteine intermediate.

This sequence belongs to the radical SAM superfamily. RlmN family. [4Fe-4S] cluster serves as cofactor.

It localises to the cytoplasm. It catalyses the reaction adenosine(2503) in 23S rRNA + 2 reduced [2Fe-2S]-[ferredoxin] + 2 S-adenosyl-L-methionine = 2-methyladenosine(2503) in 23S rRNA + 5'-deoxyadenosine + L-methionine + 2 oxidized [2Fe-2S]-[ferredoxin] + S-adenosyl-L-homocysteine. The enzyme catalyses adenosine(37) in tRNA + 2 reduced [2Fe-2S]-[ferredoxin] + 2 S-adenosyl-L-methionine = 2-methyladenosine(37) in tRNA + 5'-deoxyadenosine + L-methionine + 2 oxidized [2Fe-2S]-[ferredoxin] + S-adenosyl-L-homocysteine. Functionally, specifically methylates position 2 of adenine 2503 in 23S rRNA and position 2 of adenine 37 in tRNAs. m2A2503 modification seems to play a crucial role in the proofreading step occurring at the peptidyl transferase center and thus would serve to optimize ribosomal fidelity. This Campylobacter lari (strain RM2100 / D67 / ATCC BAA-1060) protein is Dual-specificity RNA methyltransferase RlmN.